Consider the following 344-residue polypeptide: Mitochondrial mRNA pseudouridine synthase RPUSD3 (344 aa).

The transit peptide at M1–G41 directs the protein to the mitochondrion. The disordered stretch occupies residues F29–R59. The span at K32–A42 shows a compositional bias: basic residues. Position 64 is a phosphoserine (S64).

It belongs to the pseudouridine synthase RluA family. Forms a regulatory protein-RNA complex, consisting of RCC1L, NGRN, RPUSD3, RPUSD4, TRUB2, FASTKD2 and 16S mt-rRNA.

The protein localises to the mitochondrion matrix. The enzyme catalyses a uridine in mRNA = a pseudouridine in mRNA. In terms of biological role, catalyzes uridine to pseudouridine isomerization (pseudouridylation) of specific mitochondrial mRNAs (mt-mRNAs), a post-transcriptional modification necessary for their translation. Acts at position 390 in COXI mt-mRNA and at position 697-699 in mitochondrial COXIII mt-mRNA. As a component of a functional protein-RNA module, consisting of RCC1L, NGRN, RPUSD3, RPUSD4, TRUB2, FASTKD2 and 16S mitochondrial ribosomal RNA (16S mt-rRNA), controls 16S mt-rRNA abundance and may play a role in mitochondrial ribosome biogenesis. The protein is Mitochondrial mRNA pseudouridine synthase RPUSD3 (RPUSD3) of Bos taurus (Bovine).